The sequence spans 71 residues: ATP synthase F(0) complex subunit e, mitochondrial (71 aa).

K34 is subject to N6-acetyllysine.

It belongs to the ATPase e subunit family. As to quaternary structure, component of the ATP synthase complex composed at least of ATP5F1A/subunit alpha, ATP5F1B/subunit beta, ATP5MC1/subunit c (homooctomer), MT-ATP6/subunit a, MT-ATP8/subunit 8, ATP5ME/subunit e, ATP5MF/subunit f, ATP5MG/subunit g, ATP5MK/subunit k, ATP5MJ/subunit j, ATP5F1C/subunit gamma, ATP5F1D/subunit delta, ATP5F1E/subunit epsilon, ATP5PF/subunit F6, ATP5PB/subunit b, ATP5PD/subunit d, ATP5PO/subunit OSCP. ATP synthase complex consists of a soluble F(1) head domain (subunits alpha(3) and beta(3)) - the catalytic core - and a membrane F(0) domain - the membrane proton channel (subunits c, a, 8, e, f, g, k and j). These two domains are linked by a central stalk (subunits gamma, delta, and epsilon) rotating inside the F1 region and a stationary peripheral stalk (subunits F6, b, d, and OSCP).

It localises to the mitochondrion. Its subcellular location is the mitochondrion inner membrane. Its function is as follows. Subunit e, of the mitochondrial membrane ATP synthase complex (F(1)F(0) ATP synthase or Complex V) that produces ATP from ADP in the presence of a proton gradient across the membrane which is generated by electron transport complexes of the respiratory chain. ATP synthase complex consist of a soluble F(1) head domain - the catalytic core - and a membrane F(1) domain - the membrane proton channel. These two domains are linked by a central stalk rotating inside the F(1) region and a stationary peripheral stalk. During catalysis, ATP synthesis in the catalytic domain of F(1) is coupled via a rotary mechanism of the central stalk subunits to proton translocation. In vivo, can only synthesize ATP although its ATP hydrolase activity can be activated artificially in vitro. Part of the complex F(0) domain. This chain is ATP synthase F(0) complex subunit e, mitochondrial, found in Bos taurus (Bovine).